We begin with the raw amino-acid sequence, 134 residues long: Holo-[acyl-carrier-protein] synthase (134 aa).

Residues D8 and E59 each coordinate Mg(2+).

The protein belongs to the P-Pant transferase superfamily. AcpS family. The cofactor is Mg(2+).

The protein resides in the cytoplasm. The catalysed reaction is apo-[ACP] + CoA = holo-[ACP] + adenosine 3',5'-bisphosphate + H(+). Functionally, transfers the 4'-phosphopantetheine moiety from coenzyme A to a Ser of acyl-carrier-protein. This is Holo-[acyl-carrier-protein] synthase from Zymomonas mobilis subsp. mobilis (strain ATCC 31821 / ZM4 / CP4).